The following is a 425-amino-acid chain: Pectate lyase L (425 aa).

Positions 1–25 (MKYLNCFISTGLAAFFLVNSTSVLA) are cleaved as a signal peptide. The cysteines at positions 28 and 114 are disulfide-linked. 4 residues coordinate Ca(2+): Asp-209, Asp-233, Asp-234, and Asp-237. Residue Lys-273 is the Proton acceptor of the active site. Residues Asn-402, Ser-413, Ala-416, Asp-418, and Glu-423 each contribute to the Ca(2+) site.

The protein belongs to the polysaccharide lyase 9 family. Requires Ca(2+) as cofactor.

It is found in the secreted. The enzyme catalyses Eliminative cleavage of (1-&gt;4)-alpha-D-galacturonan to give oligosaccharides with 4-deoxy-alpha-D-galact-4-enuronosyl groups at their non-reducing ends.. Its pathway is glycan metabolism; pectin degradation; 2-dehydro-3-deoxy-D-gluconate from pectin: step 2/5. Presents an endo-cleaving activity on polygalacturonate or partially methylated pectin. The chain is Pectate lyase L (pelL) from Dickeya chrysanthemi (Pectobacterium chrysanthemi).